The chain runs to 333 residues: Probable malate dehydrogenase 3 (333 aa).

An NAD(+)-binding site is contributed by 12–18; sequence GAAGQIA. Substrate is bound by residues R93 and R99. Residues N106, Q113, and 130 to 132 contribute to the NAD(+) site; that span reads VGN. Residues N132 and R163 each contribute to the substrate site. Catalysis depends on H188, which acts as the Proton acceptor.

This sequence belongs to the LDH/MDH superfamily. MDH type 2 family. Homodimer.

The catalysed reaction is (S)-malate + NAD(+) = oxaloacetate + NADH + H(+). Catalyzes the reversible oxidation of malate to oxaloacetate. The sequence is that of Probable malate dehydrogenase 3 (mdhC) from Dictyostelium discoideum (Social amoeba).